The following is a 228-amino-acid chain: Ribosomal RNA small subunit methyltransferase G (228 aa).

Residues Gly-82, Leu-87, 105–107, 133–134, and Arg-147 each bind S-adenosyl-L-methionine; these read DAT and VE.

The protein belongs to the methyltransferase superfamily. RNA methyltransferase RsmG family.

The protein localises to the cytoplasm. Specifically methylates the N7 position of a guanine in 16S rRNA. The polypeptide is Ribosomal RNA small subunit methyltransferase G (Pelodictyon phaeoclathratiforme (strain DSM 5477 / BU-1)).